The primary structure comprises 1694 residues: Clathrin heavy chain (1694 aa).

A globular terminal domain region spans residues M1–Y478. WD40-like repeat regions lie at residues S23–K67, T68–P107, L108–Q149, N150–E195, G196–A256, S257–E300, and N301–D329. A binding site for the uncoating ATPase, involved in lattice disassembly region spans residues E448–D464. The segment at Y479–N522 is flexible linker. Positions A523–F1694 are heavy chain arm. CHCR repeat units follow at residues K537–Q681, A687–Y829, I834–D973, L980–C1125, F1129–A1270, I1275–N1421, and L1424–F1567. The segment at A1214–A1523 is involved in binding clathrin light chain. Residues G1551–F1694 form a trimerization region. A coiled-coil region spans residues K1610 to Q1640.

This sequence belongs to the clathrin heavy chain family. As to quaternary structure, clathrin coats are formed from molecules containing 3 heavy chains and 3 light chains.

The protein resides in the cytoplasmic vesicle membrane. Its subcellular location is the membrane. It localises to the coated pit. Functionally, clathrin is the major protein of the polyhedral coat of coated pits and vesicles. In Dictyostelium discoideum (Social amoeba), this protein is Clathrin heavy chain (chcA).